A 651-amino-acid polypeptide reads, in one-letter code: Acetyl-coenzyme A synthetase (651 aa).

CoA contacts are provided by residues 189-192 (RGGK), Thr-311, and Asn-335. Residues 387 to 389 (GEP), 411 to 416 (DTWWQT), Asp-500, and Arg-515 each bind ATP. Ser-523 lines the CoA pocket. An ATP-binding site is contributed by Arg-526. The Mg(2+) site is built by Val-537, His-539, and Val-542. Arg-584 contributes to the CoA binding site. At Lys-609 the chain carries N6-acetyllysine.

Belongs to the ATP-dependent AMP-binding enzyme family. Requires Mg(2+) as cofactor. In terms of processing, acetylated. Deacetylation by the SIR2-homolog deacetylase activates the enzyme.

The catalysed reaction is acetate + ATP + CoA = acetyl-CoA + AMP + diphosphate. Catalyzes the conversion of acetate into acetyl-CoA (AcCoA), an essential intermediate at the junction of anabolic and catabolic pathways. AcsA undergoes a two-step reaction. In the first half reaction, AcsA combines acetate with ATP to form acetyl-adenylate (AcAMP) intermediate. In the second half reaction, it can then transfer the acetyl group from AcAMP to the sulfhydryl group of CoA, forming the product AcCoA. This chain is Acetyl-coenzyme A synthetase, found in Allorhizobium ampelinum (strain ATCC BAA-846 / DSM 112012 / S4) (Agrobacterium vitis (strain S4)).